Here is an 80-residue protein sequence, read N- to C-terminus: Cell division protein ZapB (80 aa).

A coiled-coil region spans residues 3–80 (LEILEQLEAK…GLLGKMDEVE (78 aa)). Residues 41 to 60 (LEQANNGRSEVEQEAQRARD) are disordered. Over residues 49-60 (SEVEQEAQRARD) the composition is skewed to basic and acidic residues.

This sequence belongs to the ZapB family. As to quaternary structure, homodimer. The ends of the coiled-coil dimer bind to each other, forming polymers. Interacts with FtsZ.

The protein resides in the cytoplasm. Non-essential, abundant cell division factor that is required for proper Z-ring formation. It is recruited early to the divisome by direct interaction with FtsZ, stimulating Z-ring assembly and thereby promoting cell division earlier in the cell cycle. Its recruitment to the Z-ring requires functional FtsA or ZipA. The sequence is that of Cell division protein ZapB from Aliivibrio fischeri (strain ATCC 700601 / ES114) (Vibrio fischeri).